The chain runs to 622 residues: Probable potassium transport system protein Kup (622 aa).

The next 12 membrane-spanning stretches (helical) occupy residues 9–29 (LPAVTLAAIGVVYGDIGTSPL), 52–72 (FLSLIFWALILVVSVKYLAFV), 101–121 (VLLVLGLIGGGFFYGEVVITP), 137–157 (PALTPYILPVAIAVLTALFVI), 169–189 (FGPVMLLWFFSLGTLGAISIF), 213–233 (VAFFSLGSVVLAITGVEALYA), 247–267 (WFTVALPALLLNYFGQGALIL), 287–309 (FPMVILSTMATVIASQAVISGVF), 337–357 (IYIPFVNWMLYIAVLIVVVTF), 363–383 (LAAAYGIAVTGTMVITTILAC), 396–416 (VVKIILISLLLIDVPLFLANV), and 419–439 (FFAGGWLPVMLGAIMFMVMAT).

It belongs to the HAK/KUP transporter (TC 2.A.72) family.

It localises to the cell inner membrane. It carries out the reaction K(+)(in) + H(+)(in) = K(+)(out) + H(+)(out). Its function is as follows. Transport of potassium into the cell. Likely operates as a K(+):H(+) symporter. The sequence is that of Probable potassium transport system protein Kup from Tolumonas auensis (strain DSM 9187 / NBRC 110442 / TA 4).